The sequence spans 530 residues: uncharacterized protein (530 aa).

Residues 1 to 33 form a disordered region; it reads MNNMSLKFPDIAINSSESSDDEDPSSKNEKKDG. The segment covering 24–33 has biased composition (basic and acidic residues); it reads PSSKNEKKDG. 12 helical membrane-spanning segments follow: residues 83–103, 124–144, 147–167, 181–201, 211–231, 244–264, 323–343, 346–366, 375–395, 404–424, 436–456, and 471–491; these read FFIL…KTAV, WLST…GYLL, FPIS…VLLM, FFSG…TAMW, VVSW…LGYG, YPFL…LFFP, VTNA…YSGI, TLLT…SGIF, IPLA…IWKI, VVGV…LSLL, TVNA…PQLF, and SLVS…YYIF.

It belongs to the major facilitator superfamily. Allantoate permease family.

It localises to the endoplasmic reticulum. It is found in the membrane. This is an uncharacterized protein from Schizosaccharomyces pombe (strain 972 / ATCC 24843) (Fission yeast).